The primary structure comprises 93 residues: Alpha-defensin 22 (93 aa).

The signal sequence occupies residues 1-19 (MKKLVLLSALVLLAYQVQT). Residues 20–58 (DPIQNTDEETNTEEQPGEEDQAVSVSFGGQEGSALHEKL) constitute a propeptide that is removed on maturation. Residues 22 to 41 (IQNTDEETNTEEQPGEEDQA) form a disordered region. The segment covering 25 to 40 (TDEETNTEEQPGEEDQ) has biased composition (acidic residues). Cystine bridges form between Cys64–Cys89, Cys66–Cys81, and Cys71–Cys88.

The protein belongs to the alpha-defensin family.

It localises to the secreted. Its function is as follows. May have microbicidal activities. The sequence is that of Alpha-defensin 22 (Defa22) from Mus musculus (Mouse).